We begin with the raw amino-acid sequence, 337 residues long: Large ribosomal subunit protein uL3 (337 aa).

Residues 1–20 are disordered; it reads MASIHRPKRGSLAFSPRKRA.

The protein belongs to the universal ribosomal protein uL3 family. As to quaternary structure, part of the 50S ribosomal subunit. Forms a cluster with proteins L14 and L24e.

Functionally, one of the primary rRNA binding proteins, it binds directly near the 3'-end of the 23S rRNA, where it nucleates assembly of the 50S subunit. The polypeptide is Large ribosomal subunit protein uL3 (Methanosarcina acetivorans (strain ATCC 35395 / DSM 2834 / JCM 12185 / C2A)).